The chain runs to 883 residues: Phosphoenolpyruvate carboxylase (883 aa).

Active-site residues include His-138 and Lys-546.

This sequence belongs to the PEPCase type 1 family. It depends on Mg(2+) as a cofactor.

It catalyses the reaction oxaloacetate + phosphate = phosphoenolpyruvate + hydrogencarbonate. Its function is as follows. Forms oxaloacetate, a four-carbon dicarboxylic acid source for the tricarboxylic acid cycle. This chain is Phosphoenolpyruvate carboxylase, found in Shigella flexneri.